Here is a 235-residue protein sequence, read N- to C-terminus: 5'-methylthioadenosine/S-adenosylhomocysteine nucleosidase (235 aa).

Glutamate 12 acts as the Proton acceptor in catalysis. Residues glycine 78, methionine 153, and 174-175 (ME) each bind substrate. Aspartate 198 serves as the catalytic Proton donor.

The protein belongs to the PNP/UDP phosphorylase family. MtnN subfamily.

The catalysed reaction is S-adenosyl-L-homocysteine + H2O = S-(5-deoxy-D-ribos-5-yl)-L-homocysteine + adenine. The enzyme catalyses S-methyl-5'-thioadenosine + H2O = 5-(methylsulfanyl)-D-ribose + adenine. It catalyses the reaction 5'-deoxyadenosine + H2O = 5-deoxy-D-ribose + adenine. The protein operates within amino-acid biosynthesis; L-methionine biosynthesis via salvage pathway; S-methyl-5-thio-alpha-D-ribose 1-phosphate from S-methyl-5'-thioadenosine (hydrolase route): step 1/2. Functionally, catalyzes the irreversible cleavage of the glycosidic bond in both 5'-methylthioadenosine (MTA) and S-adenosylhomocysteine (SAH/AdoHcy) to adenine and the corresponding thioribose, 5'-methylthioribose and S-ribosylhomocysteine, respectively. Also cleaves 5'-deoxyadenosine, a toxic by-product of radical S-adenosylmethionine (SAM) enzymes, into 5-deoxyribose and adenine. This chain is 5'-methylthioadenosine/S-adenosylhomocysteine nucleosidase, found in Pseudoalteromonas translucida (strain TAC 125).